The following is a 106-amino-acid chain: Nucleoid-associated protein XCV1128 (106 aa).

The tract at residues 81–106 is disordered; that stretch reads IDAESKDRMGSATAGMQLPPGMKLPF.

The protein belongs to the YbaB/EbfC family. As to quaternary structure, homodimer.

The protein localises to the cytoplasm. It localises to the nucleoid. Its function is as follows. Binds to DNA and alters its conformation. May be involved in regulation of gene expression, nucleoid organization and DNA protection. This is Nucleoid-associated protein XCV1128 from Xanthomonas euvesicatoria pv. vesicatoria (strain 85-10) (Xanthomonas campestris pv. vesicatoria).